Here is a 274-residue protein sequence, read N- to C-terminus: MSSSNENAKAQAPEKSDFTRRCSLLSRYLKEKGSFGNIDLGLYRKPDSSLALPGKFDPPGKQNAMHKAGHSKGEPSTSSGGKVKDVADLSESQPGSSQLTIFFGGKVLVYNEFPVDKAKEIMEVAKQAKPVTEINIQTPINDENNNNKSSMVLPDLNEPTDNNHLTKEQQQQQEQNQIVERIARRASLHRFFAKRKDRAVARAPYQVNQNAGHHRYPPKPEIVTGQPLEAGQSSQRPPDNAIGQTMAHIKSDGDKDDIMKIEEGQSSKDLDLRL.

Disordered stretches follow at residues 49 to 95 and 139 to 176; these read SLAL…SQPG and PIND…QEQN. The 36-residue stretch at 92-127 folds into the Tify domain; the sequence is SQPGSSQLTIFFGGKVLVYNEFPVDKAKEIMEVAKQ. The segment covering 139–150 has biased composition (polar residues); that stretch reads PINDENNNNKSS. Residues 161-185 are a coiled coil; that stretch reads DNNHLTKEQQQQQEQNQIVERIARR. Residues 182 to 206 carry the Jas motif; the sequence is IARRASLHRFFAKRKDRAVARAPYQ. Positions 183–190 match the Nuclear localization signal motif; the sequence is ARRASLHR. Positions 206–274 are disordered; that stretch reads QVNQNAGHHR…QSSKDLDLRL (69 aa). Residues 249–274 are compositionally biased toward basic and acidic residues; sequence IKSDGDKDDIMKIEEGQSSKDLDLRL.

It belongs to the TIFY/JAZ family. As to quaternary structure, homo- and heterodimer. Interacts with MYC2, MYC3, MYC4, AFPH2/NINJA, TIFY10A/JAZ1, TIFY10B/JAZ2, TIFY11B/JAZ6, TIFY5A/JAZ8 and TIFY3B/JAZ12. In terms of assembly, (Microbial infection) Interacts with the pathogenic Pseudomonas syringae HopZ1a protein. (Microbial infection) Acetylated by Pseudomonas syringae HopZ1a. In terms of processing, ubiquitinated. Targeted for degradation by the SCF(COI1) E3 ubiquitin ligase-proteasome pathway during jasmonate signaling.

The protein localises to the nucleus. Its function is as follows. Repressor of jasmonate responses. The chain is Protein TIFY 11A from Arabidopsis thaliana (Mouse-ear cress).